A 466-amino-acid polypeptide reads, in one-letter code: FAD-dependent monooxygenase dpfgE (466 aa).

Residues 1-23 (MSQKPFRVIIVGGSVTGLTLAHS) form the signal peptide. FAD contacts are provided by E35, G49, and R108. N-linked (GlcNAc...) asparagine glycosylation is found at N128 and N192. The FAD site is built by D312 and A325. The N-linked (GlcNAc...) asparagine glycan is linked to N376. Residues 443–465 (GVVRNVFFLLAATVIVAWVCRLW) form a helical membrane-spanning segment.

Belongs to the paxM FAD-dependent monooxygenase family. It depends on FAD as a cofactor.

The protein localises to the membrane. It participates in secondary metabolite biosynthesis; terpenoid biosynthesis. Functionally, FAD-dependent monooxygenase; part of the gene cluster that mediates the biosynthesis of diterpenoid pyrones. The first step of the pathway is the synthesis of the alpha-pyrone moiety by the polyketide synthase dpfgA via condensation of one acetyl-CoA starter unit with 3 malonyl-CoA units and 2 methylations. The alpha-pyrone is then combined with geranylgeranyl pyrophosphate (GGPP) formed by the GGPP synthase dpfgD through the action of the prenyltransferase dpfgC to yield a linear alpha-pyrone diterpenoid. Subsequent steps in the diterpenoid pyrone biosynthetic pathway involve the decalin core formation, which is initiated by the epoxidation of the C10-C11 olefin by the FAD-dependent oxidoreductase dpfgE, and is followed by a cyclization cascade catalyzed by the terpene cyclase dpfgB. The short chain dehydrogenase/reductase dpfgG then oxidizes the 8S hydroxy group to a ketone and the short chain dehydrogenase/reductase dpfgH reduces the ketone to the 8R hydroxy group to yield higginsianin B. Higginsianin B is further methylated by the methyltransferase dpfgI to produce the intermediate named FDDP B. The cytochrome P450 monooxygenase dfgpJ then catalyzes a three-step oxidation at C-27 to generate a carboxylic acid as well as C-26 hydroxylation. Finally, methyltransferase dpfgK methylates the carboxylic acid generated by dpfgJ, yielding the final diterpenoid pyrones from the pathway which were named FDDP D and FDDP E. This chain is FAD-dependent monooxygenase dpfgE, found in Gibberella zeae (strain ATCC MYA-4620 / CBS 123657 / FGSC 9075 / NRRL 31084 / PH-1) (Wheat head blight fungus).